Here is a 1434-residue protein sequence, read N- to C-terminus: DNA-directed RNA polymerase subunit beta' (1434 aa).

Residues cysteine 70, cysteine 72, cysteine 85, and cysteine 88 each contribute to the Zn(2+) site. Mg(2+)-binding residues include aspartate 460, aspartate 462, and aspartate 464. Cysteine 840, cysteine 915, cysteine 922, and cysteine 925 together coordinate Zn(2+).

It belongs to the RNA polymerase beta' chain family. In terms of assembly, the RNAP catalytic core consists of 2 alpha, 1 beta, 1 beta' and 1 omega subunit. When a sigma factor is associated with the core the holoenzyme is formed, which can initiate transcription. It depends on Mg(2+) as a cofactor. Requires Zn(2+) as cofactor.

The enzyme catalyses RNA(n) + a ribonucleoside 5'-triphosphate = RNA(n+1) + diphosphate. Its function is as follows. DNA-dependent RNA polymerase catalyzes the transcription of DNA into RNA using the four ribonucleoside triphosphates as substrates. This chain is DNA-directed RNA polymerase subunit beta', found in Aeromonas hydrophila subsp. hydrophila (strain ATCC 7966 / DSM 30187 / BCRC 13018 / CCUG 14551 / JCM 1027 / KCTC 2358 / NCIMB 9240 / NCTC 8049).